We begin with the raw amino-acid sequence, 188 residues long: Probable nicotinate-nucleotide adenylyltransferase (188 aa).

The protein belongs to the NadD family.

The enzyme catalyses nicotinate beta-D-ribonucleotide + ATP + H(+) = deamido-NAD(+) + diphosphate. It functions in the pathway cofactor biosynthesis; NAD(+) biosynthesis; deamido-NAD(+) from nicotinate D-ribonucleotide: step 1/1. Its function is as follows. Catalyzes the reversible adenylation of nicotinate mononucleotide (NaMN) to nicotinic acid adenine dinucleotide (NaAD). This is Probable nicotinate-nucleotide adenylyltransferase from Salinispora tropica (strain ATCC BAA-916 / DSM 44818 / JCM 13857 / NBRC 105044 / CNB-440).